A 330-amino-acid chain; its full sequence is Urokinase plasminogen activator surface receptor (330 aa).

The N-terminal stretch at 1–20 (MGQPLLLLLLVYTYIPGSWG) is a signal peptide. UPAR/Ly6 domains follow at residues 21–112 (LRCL…RNRY), 113–208 (LECA…PPNG), and 209–300 (LQCY…PGKG). Intrachain disulfides connect C23–C44, C26–C32, and C37–C65. N-linked (GlcNAc...) asparagine glycosylation is present at N28. N72 carries an N-linked (GlcNAc...) asparagine glycan. 11 cysteine pairs are disulfide-bonded: C91-C96, C115-C142, C118-C125, C135-C164, C170-C187, C188-C193, C211-C239, C214-C222, C232-C258, C264-C282, and C283-C288. N179 and N189 each carry an N-linked (GlcNAc...) asparagine glycan. N-linked (GlcNAc...) asparagine glycosylation occurs at N279. G300 is lipidated: GPI-anchor amidated glycine. A propeptide spans 301 to 330 (GAPKTSPAHLSFFVSLLLTARLWGATLLCT) (removed in mature form).

As to quaternary structure, monomer. Interacts (via the UPAR/Ly6 domains) with SRPX2. Interacts with MRC2. Interacts with SORL1 (via N-terminal ectodomain); this interaction decreases PLAUR internalization. The ternary complex composed of PLAUR-PLAU-SERPINE1 also interacts with SORL1. Interacts with CD82; this interaction prevents PLAUR from binding to its high affinity ligand PLAU.

It is found in the cell membrane. Functionally, acts as a receptor for urokinase plasminogen activator. Plays a role in localizing and promoting plasmin formation. Mediates the proteolysis-independent signal transduction activation effects of U-PA. This chain is Urokinase plasminogen activator surface receptor (PLAUR), found in Bos taurus (Bovine).